The sequence spans 168 residues: ATP synthase subunit b (168 aa).

The chain crosses the membrane as a helical span at residues serine 9–leucine 29.

It belongs to the ATPase B chain family. F-type ATPases have 2 components, F(1) - the catalytic core - and F(0) - the membrane proton channel. F(1) has five subunits: alpha(3), beta(3), gamma(1), delta(1), epsilon(1). F(0) has three main subunits: a(1), b(2) and c(10-14). The alpha and beta chains form an alternating ring which encloses part of the gamma chain. F(1) is attached to F(0) by a central stalk formed by the gamma and epsilon chains, while a peripheral stalk is formed by the delta and b chains.

Its subcellular location is the cell membrane. Functionally, f(1)F(0) ATP synthase produces ATP from ADP in the presence of a proton or sodium gradient. F-type ATPases consist of two structural domains, F(1) containing the extramembraneous catalytic core and F(0) containing the membrane proton channel, linked together by a central stalk and a peripheral stalk. During catalysis, ATP synthesis in the catalytic domain of F(1) is coupled via a rotary mechanism of the central stalk subunits to proton translocation. Component of the F(0) channel, it forms part of the peripheral stalk, linking F(1) to F(0). This is ATP synthase subunit b from Bacillus mycoides (strain KBAB4) (Bacillus weihenstephanensis).